The following is a 618-amino-acid chain: UvrABC system protein C (618 aa).

The GIY-YIG domain maps to 13–92 (DKPGVYLMKN…IKKYRPKYNI (80 aa)). The 36-residue stretch at 204–239 (LDIVENFKLNMERAAENLEFEKAAMLRDKINIIEKI) folds into the UVR domain.

Belongs to the UvrC family. Interacts with UvrB in an incision complex.

It localises to the cytoplasm. Its function is as follows. The UvrABC repair system catalyzes the recognition and processing of DNA lesions. UvrC both incises the 5' and 3' sides of the lesion. The N-terminal half is responsible for the 3' incision and the C-terminal half is responsible for the 5' incision. The protein is UvrABC system protein C of Clostridium botulinum (strain Langeland / NCTC 10281 / Type F).